The sequence spans 203 residues: Imidazoleglycerol-phosphate dehydratase (203 aa).

It belongs to the imidazoleglycerol-phosphate dehydratase family.

The protein localises to the cytoplasm. The enzyme catalyses D-erythro-1-(imidazol-4-yl)glycerol 3-phosphate = 3-(imidazol-4-yl)-2-oxopropyl phosphate + H2O. It participates in amino-acid biosynthesis; L-histidine biosynthesis; L-histidine from 5-phospho-alpha-D-ribose 1-diphosphate: step 6/9. This chain is Imidazoleglycerol-phosphate dehydratase, found in Helicobacter hepaticus (strain ATCC 51449 / 3B1).